The sequence spans 502 residues: uncharacterized protein (502 aa).

2 helical membrane-spanning segments follow: residues 10-30 and 473-493; these read NLTLNLTIIFLIFCNISIXIF and FSLIIVNLIILPTIILIFGLV.

It localises to the cell membrane. This is an uncharacterized protein from Borreliella burgdorferi (strain ATCC 35210 / DSM 4680 / CIP 102532 / B31) (Borrelia burgdorferi).